Here is a 337-residue protein sequence, read N- to C-terminus: Phosphoribosylformylglycinamidine cyclo-ligase (337 aa).

It belongs to the AIR synthase family.

The protein resides in the cytoplasm. It carries out the reaction 2-formamido-N(1)-(5-O-phospho-beta-D-ribosyl)acetamidine + ATP = 5-amino-1-(5-phospho-beta-D-ribosyl)imidazole + ADP + phosphate + H(+). Its pathway is purine metabolism; IMP biosynthesis via de novo pathway; 5-amino-1-(5-phospho-D-ribosyl)imidazole from N(2)-formyl-N(1)-(5-phospho-D-ribosyl)glycinamide: step 2/2. The polypeptide is Phosphoribosylformylglycinamidine cyclo-ligase (Pseudothermotoga lettingae (strain ATCC BAA-301 / DSM 14385 / NBRC 107922 / TMO) (Thermotoga lettingae)).